The primary structure comprises 263 residues: Formamidopyrimidine-DNA glycosylase (263 aa).

Pro2 functions as the Schiff-base intermediate with DNA in the catalytic mechanism. The active-site Proton donor is the Glu3. Catalysis depends on Lys59, which acts as the Proton donor; for beta-elimination activity. 2 residues coordinate DNA: His93 and Arg111. The FPG-type zinc-finger motif lies at 229-263 (KVYGKNGSLCVRCNNVLIRERHAGRSTHYCPHCQK). Arg253 acts as the Proton donor; for delta-elimination activity in catalysis.

Belongs to the FPG family. In terms of assembly, monomer. Zn(2+) serves as cofactor.

It carries out the reaction Hydrolysis of DNA containing ring-opened 7-methylguanine residues, releasing 2,6-diamino-4-hydroxy-5-(N-methyl)formamidopyrimidine.. It catalyses the reaction 2'-deoxyribonucleotide-(2'-deoxyribose 5'-phosphate)-2'-deoxyribonucleotide-DNA = a 3'-end 2'-deoxyribonucleotide-(2,3-dehydro-2,3-deoxyribose 5'-phosphate)-DNA + a 5'-end 5'-phospho-2'-deoxyribonucleoside-DNA + H(+). Functionally, involved in base excision repair of DNA damaged by oxidation or by mutagenic agents. Acts as a DNA glycosylase that recognizes and removes damaged bases. Has a preference for oxidized purines, such as 7,8-dihydro-8-oxoguanine (8-oxoG). Has AP (apurinic/apyrimidinic) lyase activity and introduces nicks in the DNA strand. Cleaves the DNA backbone by beta-delta elimination to generate a single-strand break at the site of the removed base with both 3'- and 5'-phosphates. The polypeptide is Formamidopyrimidine-DNA glycosylase (Carboxydothermus hydrogenoformans (strain ATCC BAA-161 / DSM 6008 / Z-2901)).